A 436-amino-acid chain; its full sequence is 3-ketoacyl-CoA thiolase (436 aa).

The active-site Acyl-thioester intermediate is Cys99. Residues His392 and Cys422 each act as proton acceptor in the active site.

This sequence belongs to the thiolase-like superfamily. Thiolase family. In terms of assembly, heterotetramer of two alpha chains (FadJ) and two beta chains (FadI).

It is found in the cytoplasm. The enzyme catalyses an acyl-CoA + acetyl-CoA = a 3-oxoacyl-CoA + CoA. It participates in lipid metabolism; fatty acid beta-oxidation. Catalyzes the final step of fatty acid oxidation in which acetyl-CoA is released and the CoA ester of a fatty acid two carbons shorter is formed. In Escherichia coli O157:H7, this protein is 3-ketoacyl-CoA thiolase.